Consider the following 360-residue polypeptide: Phospho-N-acetylmuramoyl-pentapeptide-transferase (360 aa).

Helical transmembrane passes span 21–41, 73–93, 94–114, 132–152, 168–188, 199–219, 239–259, 263–283, 288–308, and 338–358; these read YLSF…LWMG, TMGG…WADL, TNPY…VGFV, WKYF…YAHG, VMPQ…VGTS, GLAI…AWAT, LVVV…FNTY, VFMG…IAVL, FVLV…ILQV, and VIVR…ATLK.

This sequence belongs to the glycosyltransferase 4 family. MraY subfamily. Mg(2+) is required as a cofactor.

The protein localises to the cell inner membrane. The enzyme catalyses UDP-N-acetyl-alpha-D-muramoyl-L-alanyl-gamma-D-glutamyl-meso-2,6-diaminopimeloyl-D-alanyl-D-alanine + di-trans,octa-cis-undecaprenyl phosphate = di-trans,octa-cis-undecaprenyl diphospho-N-acetyl-alpha-D-muramoyl-L-alanyl-D-glutamyl-meso-2,6-diaminopimeloyl-D-alanyl-D-alanine + UMP. It participates in cell wall biogenesis; peptidoglycan biosynthesis. Functionally, catalyzes the initial step of the lipid cycle reactions in the biosynthesis of the cell wall peptidoglycan: transfers peptidoglycan precursor phospho-MurNAc-pentapeptide from UDP-MurNAc-pentapeptide onto the lipid carrier undecaprenyl phosphate, yielding undecaprenyl-pyrophosphoryl-MurNAc-pentapeptide, known as lipid I. This chain is Phospho-N-acetylmuramoyl-pentapeptide-transferase, found in Vibrio cholerae serotype O1 (strain ATCC 39541 / Classical Ogawa 395 / O395).